The primary structure comprises 751 residues: Centrosomal protein of 68 kDa (751 aa).

Basic and acidic residues-rich tracts occupy residues 1 to 17 (MALG…EDTK) and 86 to 96 (ASREPVAERSE). The tract at residues 1-253 (MALGEEKAEA…PQPVFSGGDA (253 aa)) is disordered. Composition is skewed to polar residues over residues 131-144 (LPQT…TTIC) and 163-175 (APSS…SQWK). The segment covering 176-200 (SMPSPGSAAPQPSSCSVSASSTGSS) has biased composition (low complexity). A Phosphoserine modification is found at S326. The segment covering 339-348 (STLKSPTNVF) has biased composition (polar residues). Disordered stretches follow at residues 339-474 (STLK…ESDD), 511-545 (SPLE…SGDP), and 590-611 (RLDR…KGGE). 2 stretches are compositionally biased toward basic and acidic residues: residues 399 to 416 (GSRD…RGAK) and 433 to 450 (RTRD…EKRT). Polar residues predominate over residues 451-461 (SQSARRPTCTE). 2 positions are modified to phosphoserine: S466 and S472. The segment covering 520 to 537 (GPASLPSSSSQSQLPPGA) has biased composition (low complexity).

Interacts with CNTLN; the interaction recruits CEP68 to the centrosome. Interacts with the SCF(FBXW11) complex which contains SKP1, CUL1 and FBXW11; the interaction is probably mediated by FBXW11 and the complex also contains CDK5RAP2 and PCNT. Also interacts with F-box protein BTRC. Interacts with serine/threonine-protein kinase PLK1; the interaction leads to phosphorylation of CEP68 and its subsequent degradation. Interacts with NEK2; the interaction leads to phosphorylation of CEP68. Post-translationally, phosphorylation by PLK1 is required for binding to BTRC in prometaphase. Phosphorylated directly or indirectly by NEK2. NEK2-mediated phosphorylation promotes CEP68 dissociation from the centrosome and its degradation at the onset of mitosis. In terms of processing, ubiquitinated and targeted for proteasomal degradation in early mitosis by the SCF(BTRC) and/or SCF(FBXW11) E3 ubiquitin-protein ligase complexes. Degradation is complete by prometaphase and is required for removal of CDK5RAP2 from the peripheral pericentriolar material and subsequent centriole separation.

It localises to the cytoplasm. The protein localises to the cytoskeleton. The protein resides in the microtubule organizing center. It is found in the centrosome. Its function is as follows. Involved in maintenance of centrosome cohesion, probably as part of a linker structure which prevents centrosome splitting. Required for localization of CDK5RAP2 to the centrosome during interphase. Contributes to CROCC/rootletin filament formation. The polypeptide is Centrosomal protein of 68 kDa (CEP68) (Pongo abelii (Sumatran orangutan)).